Reading from the N-terminus, the 140-residue chain is Heavy metal-associated isoprenylated plant protein 31 (140 aa).

An HMA domain is found at 3–67 (MTVEIRVPNL…AVRRAGKAAE (65 aa)). A metal cation is bound by residues Cys14 and Cys17. Position 137 is a cysteine methyl ester (Cys137). Cys137 is lipidated: S-farnesyl cysteine. The propeptide at 138-140 (TIM) is removed in mature form.

Belongs to the HIPP family.

Heavy-metal-binding protein. This is Heavy metal-associated isoprenylated plant protein 31 from Arabidopsis thaliana (Mouse-ear cress).